Consider the following 677-residue polypeptide: Fidgetin-like protein 1 (677 aa).

Positions 203–216 (TSSAPSGESTTATF) are enriched in polar residues. 3 disordered regions span residues 203-232 (TSSAPSGESTTATFHRTPLFGNTKKEPQSF), 249-324 (VPSG…SFNG), and 337-378 (GIFG…TDDR). Residue Lys226 forms a Glycyl lysine isopeptide (Lys-Gly) (interchain with G-Cter in SUMO2) linkage. Residues 264–280 (DSDTINMLSNPTLNKAP) show a composition bias toward polar residues. A compositionally biased stretch (basic and acidic residues) spans 281–292 (SKTEDSGQREDN). The residue at position 341 (Lys341) is an N6-acetyllysine. A compositionally biased stretch (polar residues) spans 347 to 358 (SNKQDGSEQNGN). Residues Ala407 and 447 to 452 (GTGKTL) contribute to the ATP site.

Belongs to the AAA ATPase family. As to quaternary structure, hexamer. Interacts (via N-terminal one-half region) with RAD51; the interaction is direct. Interacts (via N-terminal one-half region) with SPIDR (via the C-terminal region); the interaction is direct. Interacts with FIRRM; may regulate homologous recombination. Mg(2+) serves as cofactor.

The protein resides in the nucleus. It is found in the cytoplasm. It localises to the perinuclear region. The enzyme catalyses ATP + H2O = ADP + phosphate + H(+). In terms of biological role, involved in DNA double-strand break (DBS) repair via homologous recombination (HR). Recruited at DSB sites independently of BRCA2, RAD51 and RAD51 paralogs in a H2AX-dependent manner. May regulate osteoblast proliferation and differentiation. May play a role in the control of male meiosis dynamic. This chain is Fidgetin-like protein 1 (Fignl1), found in Rattus norvegicus (Rat).